Here is a 267-residue protein sequence, read N- to C-terminus: Dihydropteroate synthase (267 aa).

The 251-residue stretch at 1–251 folds into the Pterin-binding domain; it reads MTKTKIMGIL…NVELNAKLAK (251 aa). Residue Asn11 participates in Mg(2+) binding. (7,8-dihydropterin-6-yl)methyl diphosphate is bound by residues Thr51, Asp84, Asn103, Asp167, Lys203, and 239–241; that span reads RVH.

This sequence belongs to the DHPS family. Homodimer. Mg(2+) is required as a cofactor.

It catalyses the reaction (7,8-dihydropterin-6-yl)methyl diphosphate + 4-aminobenzoate = 7,8-dihydropteroate + diphosphate. Its pathway is cofactor biosynthesis; tetrahydrofolate biosynthesis; 7,8-dihydrofolate from 2-amino-4-hydroxy-6-hydroxymethyl-7,8-dihydropteridine diphosphate and 4-aminobenzoate: step 1/2. In terms of biological role, catalyzes the condensation of para-aminobenzoate (pABA) with 6-hydroxymethyl-7,8-dihydropterin diphosphate (DHPt-PP) to form 7,8-dihydropteroate (H2Pte), the immediate precursor of folate derivatives. The sequence is that of Dihydropteroate synthase (folP) from Staphylococcus aureus (strain MRSA252).